The primary structure comprises 644 residues: 2-isopropylmalate synthase (644 aa).

The tract at residues 1-40 is disordered; it reads MTTSESPDAYTESFGAHTIVKPAGPPRVGQPSWNPQRASS. Residues 31-40 show a composition bias toward polar residues; sequence PSWNPQRASS. The region spanning 72 to 346 is the Pyruvate carboxyltransferase domain; the sequence is PLWCAVDLRD…DPQIDFSNID (275 aa). Residues D81, H285, H287, and N321 each coordinate Mg(2+). Residues 491–644 are regulatory domain; it reads PVRPLERIRQ…VVSAVNRAAR (154 aa). Residues 575–593 form a VNTR1 repeat; it reads VTIASPAQPGEAGRHASDP. A disordered region spans residues 581-612; sequence AQPGEAGRHASDPVTIASPAQPGEAGRHASDP. A VNTR2 repeat occupies 594-612; that stretch reads VTIASPAQPGEAGRHASDP.

This sequence belongs to the alpha-IPM synthase/homocitrate synthase family. LeuA type 2 subfamily. Homodimer. The cofactor is Mg(2+).

The protein resides in the cytoplasm. The catalysed reaction is 3-methyl-2-oxobutanoate + acetyl-CoA + H2O = (2S)-2-isopropylmalate + CoA + H(+). It participates in amino-acid biosynthesis; L-leucine biosynthesis; L-leucine from 3-methyl-2-oxobutanoate: step 1/4. Its function is as follows. Catalyzes the condensation of the acetyl group of acetyl-CoA with 3-methyl-2-oxobutanoate (2-ketoisovalerate) to form 3-carboxy-3-hydroxy-4-methylpentanoate (2-isopropylmalate). This is 2-isopropylmalate synthase from Mycobacterium tuberculosis (strain CDC 1551 / Oshkosh).